Reading from the N-terminus, the 405-residue chain is Cytoplasmic 60S subunit biogenesis factor ZNF622 (405 aa).

2 U1-type zinc fingers span residues 4-28 and 67-91; these read YTCI…TDWH and TYCT…SKKH. The interval 135–230 is disordered; that stretch reads AIRAQPSSSP…GVEEEEEKQA (96 aa). The segment covering 194 to 228 has biased composition (acidic residues); it reads AEEEEDSEEGWEEMDSDEDLGSEEEMEGVEEEEEK.

It belongs to the REI1 family. Homo- and heterodimer. Associates with pre-60S ribosomal particles. As to expression, mainly expressed in the ovary. In terms of tissue distribution, mainly expressed in the testis.

It is found in the cytoplasm. The protein resides in the nucleus. Functionally, pre-60S-associated cytoplasmic factor involved in the cytoplasmic maturation of the 60S subunit. This Gallus gallus (Chicken) protein is Cytoplasmic 60S subunit biogenesis factor ZNF622 (ZNF622).